The chain runs to 197 residues: GTP cyclohydrolase 1 (197 aa).

Cys-88, His-91, and Cys-160 together coordinate Zn(2+).

It belongs to the GTP cyclohydrolase I family. As to quaternary structure, homomer.

It catalyses the reaction GTP + H2O = 7,8-dihydroneopterin 3'-triphosphate + formate + H(+). The protein operates within cofactor biosynthesis; 7,8-dihydroneopterin triphosphate biosynthesis; 7,8-dihydroneopterin triphosphate from GTP: step 1/1. This Clostridium beijerinckii (strain ATCC 51743 / NCIMB 8052) (Clostridium acetobutylicum) protein is GTP cyclohydrolase 1.